A 363-amino-acid polypeptide reads, in one-letter code: Spermatogenesis-associated protein 22 (363 aa).

Polar residues-rich tracts occupy residues 1–12 and 145–157; these read MKRSLNENSARS and SCPM…QQKQ. Disordered regions lie at residues 1–51 and 145–169; these read MKRS…DNYD and SCPM…LPRN.

In terms of assembly, component of a multiprotein complex with MEIOB and RPA2. Interacts with MEIOB. Interacts with the complex BRME1:HSF2BP:BRCA2. In terms of tissue distribution, expressed in testis.

The protein localises to the chromosome. In terms of biological role, meiosis-specific protein required for homologous recombination in meiosis I. The polypeptide is Spermatogenesis-associated protein 22 (SPATA22) (Macaca fascicularis (Crab-eating macaque)).